Reading from the N-terminus, the 486-residue chain is Protein ZINC INDUCED FACILITATOR 1 (486 aa).

Helical transmembrane passes span 41-61 (FVWIIVLSTSLPISSLYPFLY), 82-102 (FVGCSFMLGRALTSVFWGIVA), 109-129 (PIILLGTISIAIFNALFGLSS), 131-151 (FWMAIGTRFLLGSFNCLLGTM), 170-190 (AVSTAWGIGLIIGPALGGFLA), 212-232 (ALPCFTISAFALLVTVLCCFI), 288-308 (IIVYCVLCLHDTAYSEIFALW), 327-347 (TVLAISGLGLFSFQVFVYPLA), 362-384 (ALMIPIQMSYPFIAGLSGLSLSL), 391-408 (ILINVLSVSAITGLLILQ), 423-443 (IAMTAMSLFKTVGPAGAGILF), and 461-481 (VFFVLNVIVVVGVALTFKPFL).

This sequence belongs to the major facilitator superfamily. As to expression, strongly expressed in developing leaves, differentiating zones of root tips and sepals of developing flowers. Restricted to vascular tissues in older leaves, mature roots, flowers, anthers and filaments. Not expressed in developing anthers.

The protein localises to the vacuole membrane. Functionally, major facilitator superfamily (MFS) transporter involved in zinc tolerance by participating in vacuolar sequestration of zinc. This chain is Protein ZINC INDUCED FACILITATOR 1 (ZIF1), found in Arabidopsis thaliana (Mouse-ear cress).